Here is a 296-residue protein sequence, read N- to C-terminus: Probable AP endonuclease (296 aa).

A disulfide bridge connects residues cysteine 16 and cysteine 20. Zn(2+) is bound by residues histidine 78, histidine 115, glutamate 142, histidine 182, histidine 218, aspartate 231, histidine 233, and glutamate 271.

This sequence belongs to the AP endonuclease 2 family. Zn(2+) serves as cofactor.

The protein resides in the host nucleus. It is found in the host cytoplasm. It localises to the virion. Its function is as follows. Endonuclease of the viral base excision repair system that catalyzes DNA cleavage reaction at the apurinic or apyrimidinic sites (AP sites). Cleaves phosphodiester bonds on the 5' side of AP sites. In addition to endonuclease activity, the AP endonuclease has a proofreading 3'-5' exonuclease activity that is considerably more efficient in the elimination of a mismatch than in that of a correctly paired base. Displays 3'-phosphatase and 3'-repair diesterase activities. The single nucleotide gaps generated by the AP endonuclease are filled by the viral repair DNA polymerase X and the DNA ligase. This chain is Probable AP endonuclease, found in Ornithodoros (relapsing fever ticks).